We begin with the raw amino-acid sequence, 1084 residues long: Myosin heavy chain, skeletal muscle (1084 aa).

3 disordered regions span residues 1 to 20 (SAETEKEMANMKEEFEKTKE), 270 to 292 (EIEAERASRAKAEKQRSDLSREL), and 298 to 317 (RLEEAGGATSAQIEMNKKRE). Positions 1–258 (SAETEKEMAN…SKIEDEQALM (258 aa)) are alpha-helical tailpiece (S2). Residues 259-1084 (TNLQRIEELE…DVHSKVISEE (826 aa)) form a rodlike tail (S2 and LMM domains) region. Positions 273 to 292 (AERASRAKAEKQRSDLSREL) are enriched in basic and acidic residues. Residues 455 to 1084 (QAFTQQIEGL…DVHSKVISEE (630 aa)) adopt a coiled-coil conformation.

Muscle myosin is a hexameric protein that consists of 2 heavy chain subunits (MHC), 2 alkali light chain subunits (MLC) and 2 regulatory light chain subunits (MLC-2).

It localises to the cytoplasm. It is found in the myofibril. Its function is as follows. Muscle contraction. The sequence is that of Myosin heavy chain, skeletal muscle from Oryctolagus cuniculus (Rabbit).